The sequence spans 123 residues: Glutaredoxin-like protein (123 aa).

The 97-residue stretch at 27 to 123 (INEVEESITN…GTLFNDLKKK (97 aa)) folds into the Glutaredoxin domain.

Belongs to the glutaredoxin family.

In Dictyostelium discoideum (Social amoeba), this protein is Glutaredoxin-like protein (grxB).